A 203-amino-acid chain; its full sequence is Peptide deformylase (203 aa).

Positions 121 and 163 each coordinate Fe cation. Glutamate 164 is an active-site residue. Histidine 167 lines the Fe cation pocket.

The protein belongs to the polypeptide deformylase family. Fe(2+) serves as cofactor.

The catalysed reaction is N-terminal N-formyl-L-methionyl-[peptide] + H2O = N-terminal L-methionyl-[peptide] + formate. In terms of biological role, removes the formyl group from the N-terminal Met of newly synthesized proteins. Requires at least a dipeptide for an efficient rate of reaction. N-terminal L-methionine is a prerequisite for activity but the enzyme has broad specificity at other positions. The polypeptide is Peptide deformylase (Prochlorococcus marinus (strain SARG / CCMP1375 / SS120)).